We begin with the raw amino-acid sequence, 347 residues long: Haptoglobin (347 aa).

Residues 1 to 18 form the signal peptide; that stretch reads MRALGAVITLLLWGQLFA. One can recognise a Sushi domain in the interval 31–88; sequence DSCPKPPEIANGYVEHLVRYQCKNYYRLRTEGDGVYALNSEKQWVNKAVGEQLPECEA. Intrachain disulfides connect Cys52/Cys86 and Cys90/Cys207. The Peptidase S1 domain occupies 103–345; that stretch reads IIGGSLDAKG…ILDWIQKTIA (243 aa). N-linked (GlcNAc...) asparagine glycans are attached at residues Asn148, Asn152, Asn182, Asn230, and Asn256. Disulfide bonds link Cys250–Cys281 and Cys292–Cys322. The tract at residues 259-264 is interaction with CD163; that stretch reads VPENKI.

It belongs to the peptidase S1 family. In terms of assembly, tetramer of two alpha and two beta chains; disulfide-linked. The hemoglobin/haptoglobin complex is composed of a haptoglobin dimer bound to two hemoglobin alpha-beta dimers. Interacts with CD163. Interacts with ERGIC3. In terms of tissue distribution, expressed by the liver and secreted in plasma.

Its subcellular location is the secreted. Functionally, as a result of hemolysis, hemoglobin is found to accumulate in the kidney and is secreted in the urine. Haptoglobin captures, and combines with free plasma hemoglobin to allow hepatic recycling of heme iron and to prevent kidney damage. Haptoglobin also acts as an antioxidant, has antibacterial activity and plays a role in modulating many aspects of the acute phase response. Hemoglobin/haptoglobin complexes are rapidly cleared by the macrophage CD163 scavenger receptor expressed on the surface of liver Kupfer cells through an endocytic lysosomal degradation pathway. The protein is Haptoglobin (HP) of Oryctolagus cuniculus (Rabbit).